The primary structure comprises 188 residues: Inactive cysteine S-methyltransferase OspZ (188 aa).

This sequence belongs to the NleE/OspZ family.

The protein localises to the secreted. It is found in the host cytoplasm. The protein resides in the host nucleus. Its function is as follows. Inactive effector protein: in contrast to other members of the family, does not have the ability to inhibit host cell NF-kappa-B activation. Probably lacks cysteine S-methyltransferase activity due to its inability to bind S-adenosyl-L-methionine at the C-terminus. This chain is Inactive cysteine S-methyltransferase OspZ, found in Shigella flexneri.